The chain runs to 122 residues: Small ribosomal subunit protein uS13 (122 aa).

The tract at residues 95–122 (GLPVRGQRTKTNSRTRKGRRKTVANKKK) is disordered. The span at 101 to 122 (QRTKTNSRTRKGRRKTVANKKK) shows a compositional bias: basic residues.

This sequence belongs to the universal ribosomal protein uS13 family. Part of the 30S ribosomal subunit. Forms a loose heterodimer with protein S19. Forms two bridges to the 50S subunit in the 70S ribosome.

Its function is as follows. Located at the top of the head of the 30S subunit, it contacts several helices of the 16S rRNA. In the 70S ribosome it contacts the 23S rRNA (bridge B1a) and protein L5 of the 50S subunit (bridge B1b), connecting the 2 subunits; these bridges are implicated in subunit movement. Contacts the tRNAs in the A and P-sites. The sequence is that of Small ribosomal subunit protein uS13 from Protochlamydia amoebophila (strain UWE25).